A 366-amino-acid polypeptide reads, in one-letter code: S-adenosylmethionine:tRNA ribosyltransferase-isomerase (366 aa).

It belongs to the QueA family. As to quaternary structure, monomer.

It localises to the cytoplasm. The enzyme catalyses 7-aminomethyl-7-carbaguanosine(34) in tRNA + S-adenosyl-L-methionine = epoxyqueuosine(34) in tRNA + adenine + L-methionine + 2 H(+). Its pathway is tRNA modification; tRNA-queuosine biosynthesis. In terms of biological role, transfers and isomerizes the ribose moiety from AdoMet to the 7-aminomethyl group of 7-deazaguanine (preQ1-tRNA) to give epoxyqueuosine (oQ-tRNA). This chain is S-adenosylmethionine:tRNA ribosyltransferase-isomerase, found in Agrobacterium fabrum (strain C58 / ATCC 33970) (Agrobacterium tumefaciens (strain C58)).